We begin with the raw amino-acid sequence, 215 residues long: uncharacterized protein (215 aa).

This is an uncharacterized protein from Archaeoglobus fulgidus (strain ATCC 49558 / DSM 4304 / JCM 9628 / NBRC 100126 / VC-16).